Consider the following 146-residue polypeptide: Hemoglobin subunit beta-2 (146 aa).

One can recognise a Globin domain in the interval 2–146; that stretch reads FLSAEEKGLV…VASALAHRYH (145 aa). Lys-17 carries the N6-succinyllysine modification. A phosphoserine mark is found at Ser-44 and Ser-50. Lys-59 bears the N6-succinyllysine mark. Residues His-63 and His-92 each contribute to the heme b site. Position 104 is an asymmetric dimethylarginine (Arg-104).

Belongs to the globin family. Heterotetramer of two alpha chains and two beta chains. Red blood cells.

Its function is as follows. Involved in oxygen transport from the lung to the various peripheral tissues. The polypeptide is Hemoglobin subunit beta-2 (HBB2) (Panthera pardus saxicolor (Northern Persian leopard)).